The following is a 400-amino-acid chain: Centrosomal protein CEP57L1 (400 aa).

Serine 45 is modified (phosphoserine). 2 coiled-coil regions span residues 47–111 (NNQA…KKDI) and 138–213 (NVER…QDRA). 2 disordered regions span residues 222–261 (REPPQQRDHKFRTPTFERKKPFRTTSQARANPQSSGEPVS) and 314–400 (MESK…KWEQ). The span at 244–258 (RTTSQARANPQSSGE) shows a compositional bias: polar residues. Residues 261-345 (SICDSLSELL…EKIENSRINE (85 aa)) are a coiled coil. Composition is skewed to basic and acidic residues over residues 314-342 (MESKGDQISKLKKHQDSVRKLQEKIENSR) and 391-400 (LRRDDIKWEQ).

It belongs to the translokin family.

It is found in the cytoplasm. The protein resides in the cytoskeleton. Its subcellular location is the microtubule organizing center. The protein localises to the centrosome. Its function is as follows. Centrosomal protein which may be required for microtubule attachment to centrosomes. The polypeptide is Centrosomal protein CEP57L1 (Cep57l1) (Mus musculus (Mouse)).